The following is a 264-amino-acid chain: Proliferating cell nuclear antigen 2 (264 aa).

Residues 61-80 mediate DNA binding; it reads RCDRNLSMGMNLGNMSKMLK.

Belongs to the PCNA family. As to quaternary structure, homo- and heterotrimer. Interacts with POLH, ATXR5 and ATXR6.

It is found in the nucleus. In terms of biological role, this protein is an auxiliary protein of DNA polymerase delta and is involved in the control of eukaryotic DNA replication by increasing the polymerase's processibility during elongation of the leading strand. May be involved in UV resistance. This Arabidopsis thaliana (Mouse-ear cress) protein is Proliferating cell nuclear antigen 2 (PCNA2).